The primary structure comprises 89 residues: Small ribosomal subunit protein uS15 (89 aa).

It belongs to the universal ribosomal protein uS15 family. Part of the 30S ribosomal subunit. Forms a bridge to the 50S subunit in the 70S ribosome, contacting the 23S rRNA.

Functionally, one of the primary rRNA binding proteins, it binds directly to 16S rRNA where it helps nucleate assembly of the platform of the 30S subunit by binding and bridging several RNA helices of the 16S rRNA. Forms an intersubunit bridge (bridge B4) with the 23S rRNA of the 50S subunit in the ribosome. The chain is Small ribosomal subunit protein uS15 from Buchnera aphidicola subsp. Acyrthosiphon pisum (strain 5A).